Reading from the N-terminus, the 145-residue chain is Large ribosomal subunit protein bL19 (145 aa).

It belongs to the bacterial ribosomal protein bL19 family.

Its function is as follows. This protein is located at the 30S-50S ribosomal subunit interface and may play a role in the structure and function of the aminoacyl-tRNA binding site. The sequence is that of Large ribosomal subunit protein bL19 from Brucella abortus (strain S19).